The chain runs to 345 residues: Adenylosuccinate synthetase (345 aa).

GTP contacts are provided by residues 18–24 (GDEGKGK) and 48–50 (GHT). Asp19 functions as the Proton acceptor in the catalytic mechanism. Asp19 and Gly48 together coordinate Mg(2+). IMP-binding positions include 19–22 (DEGK), 46–49 (NAGH), Thr133, Arg147, Gln185, Thr200, and Arg262. Catalysis depends on His49, which acts as the Proton donor. 258–264 (TVTGRRR) is a substrate binding site. Residues Arg264, 290–292 (GLD), and 330–332 (STG) contribute to the GTP site.

The protein belongs to the adenylosuccinate synthetase family. As to quaternary structure, homodimer. It depends on Mg(2+) as a cofactor.

The protein localises to the cytoplasm. The enzyme catalyses IMP + L-aspartate + GTP = N(6)-(1,2-dicarboxyethyl)-AMP + GDP + phosphate + 2 H(+). Its pathway is purine metabolism; AMP biosynthesis via de novo pathway; AMP from IMP: step 1/2. Functionally, plays an important role in the de novo pathway of purine nucleotide biosynthesis. Catalyzes the first committed step in the biosynthesis of AMP from IMP. The protein is Adenylosuccinate synthetase of Methanocaldococcus jannaschii (strain ATCC 43067 / DSM 2661 / JAL-1 / JCM 10045 / NBRC 100440) (Methanococcus jannaschii).